A 141-amino-acid polypeptide reads, in one-letter code: Myosin regulatory light chain cdc4 (141 aa).

A phosphoserine mark is found at S2 and S6. EF-hand domains are found at residues 3 to 38, 74 to 109, and 109 to 141; these read TDDS…CGQN, GDPE…LGEK, and KLSN…ILAN. D87, D89, T91, M93, and E98 together coordinate Ca(2+).

As to quaternary structure, binds to myosin II chains myo2 and myo3. Interacts with vps27 and a PI 4-kinase pik1. Post-translationally, phosphorylated on either Ser-2 or Ser-6 but not both. Phosphorylation is not essential for the function of the protein.

It is found in the cytoplasm. In terms of biological role, involved in cytokinesis. Required for the formation and function of the contractile ring. In Schizosaccharomyces pombe (strain 972 / ATCC 24843) (Fission yeast), this protein is Myosin regulatory light chain cdc4 (cdc4).